The following is a 773-amino-acid chain: MRTLEDSSGTVLHRLIQEQLRYGNLTETRTLLAIQQQALRGGAGAGGTGSPQASLEIGAPEDSQVLQQATRQEPQGQEHQGGETHLAENRLYRLCPQPSKGEELPTYEEAKAHSQYYAAQQAGSRLHGGDRDPRGASGGSRRQDEALRELRHGHVRSLSERLLQLSLERNGARVPSHMSSSHSFPQLARSQQGPQPRGPPAEGPEPRGPPPQYPHAVMAQETAAVNDPRYRPRSSPHFQHAEVRILQAQVPPVFLQQQQYQYLQQPQEHSPPLHPAALGHGPPSSFSPPALEGPPGAQATSGSAHLAQMESVLRENARLQRDNERLQRELESTSEKASCIEKLENEIQRLSEAHESLMRTSSKREALEKTMRNKMDSEMRRLQDFNRDLRERLESANRHLASKTQEAQAGSQDMVAKLLAQSYEQQQEQEKLEREMALLRGAIEDQRRRAELLEQALGNAQSRAARAEEELRKKQAYVEKVERLQQALGQLQAACEKREQLELRLRTRLEQELKALRAQQRQTGTLTGGGGSHTGSTELSALRLSEQLREKEEQILALEADMTKWEQKYLEERAMRQFAMDAAATAAAQRDTTLIRHSPQPSPSSSFNEGLLAGNHRHQEMESRLKVLHAQILEKDAVIKVLQQRSRKDPGKATQGTLRPAKSVPSIFAAAVGTQGWQGFSTSERQTDAPARQTVDRGPAEEPPATPPLPAHTKHGSRDGSTQTDGPADSTSACLASEPDSLLGCNGSQRTTSLDSIAATRVQDLSDMVEILI.

Disordered regions lie at residues 41–157 (GGAG…HVRS), 169–238 (RNGA…SPHF), and 259–309 (QYQY…LAQM). Basic and acidic residues-rich tracts occupy residues 80-91 (QGGETHLAENRL), 100-112 (KGEELPTYEEAKA), and 141-152 (RRQDEALRELRH). The interval 101-302 (GEELPTYEEA…GPPGAQATSG (202 aa)) is required for interaction with CDH5. At Tyr107 the chain carries Phosphotyrosine; by FGFR1. Residues 177–190 (HMSSSHSFPQLARS) show a composition bias toward polar residues. Positions 196–213 (PRGPPAEGPEPRGPPPQY) are enriched in pro residues. The segment at 220–302 (QETAAVNDPR…GPPGAQATSG (83 aa)) is required for interaction with CDH1. Residues 304-577 (AHLAQMESVL…KYLEERAMRQ (274 aa)) adopt a coiled-coil conformation. Glycyl lysine isopeptide (Lys-Gly) (interchain with G-Cter in ubiquitin) cross-links involve residues Lys342 and Lys403. 2 disordered regions span residues 589 to 611 (QRDTTLIRHSPQPSPSSSFNEGL) and 677 to 754 (WQGF…TTSL). Pro residues predominate over residues 701–710 (EEPPATPPLP). Residues 719–734 (DGSTQTDGPADSTSAC) are compositionally biased toward polar residues. Ser753 and Ser756 each carry phosphoserine. A PDZ-binding motif is present at residues 770–773 (EILI).

Belongs to the angiomotin family. In terms of assembly, part of a complex composed of AMOTL2, MAGI1 and CDH5, within the complex AMOTL2 acts as a scaffold protein for the interaction of MAGI1 with CDH5. The complex is required for coupling actin fibers to cell junctions in endothelial cells. Within the complex AMOTL2 (via its N-terminus) interacts with CDH5. Interacts (via N-terminus) with MAGI1. Interacts (via N-terminus) with ACTB; the interaction facilitates binding of cell junction complexes to actin fibers in endothelial cells. Interacts with CDH1; the interaction may facilitate binding of radial actin fibers to cell junction complexes. Interacts with SRC. Interacts with YAP1; the interaction is required for ubiquitination of AMOTL2 and localization of YAP1 to tight junctions. Interacts with WWP1; the interaction facilitates WWP1 interaction with the Crumbs complex and subsequent WWP1 translocation to the plasma membrane. WWP1 interaction with the Crumbs complex promotes WWP1 monoubiquitination of AMOTL2 which subsequently activates the Hippo signaling pathway. When ubiquitinated interacts with LATS2 (via UBA domain); the interaction promotes LATS2 phosphorylation of YAP1. Interacts (via PPXY motif) with WWTR1/TAZ (via WW domain); the interaction promotes WWTR1/TAZ localization to the cytoplasm and thereby inhibition of its transcriptional properties. Interacts with PHLDB2; interaction may facilitate PHLDB2 localization to the myotube podosome cortex that surrounds the core. Monoubiquitinated at Lys-342 and Lys-403 by Crumbs complex-bound WWP1. De-ubiquitinated at Lys-342 and Lys-403 by USP9X; the interaction may be promoted by cell contact inhibition. Deubiquitination of AMOTL2 negatively regulates Hippo signaling activation. In terms of processing, phosphorylation at Tyr-107 is necessary for efficient binding to SRC and synergistically functioning with SRC to activate the downstream MAPK pathway.

It is found in the recycling endosome. It localises to the cytoplasm. Its subcellular location is the cell projection. The protein resides in the podosome. The protein localises to the cell junction. In terms of biological role, regulates the translocation of phosphorylated SRC to peripheral cell-matrix adhesion sites. Required for proper architecture of actin filaments. Plays a role in coupling actin fibers to cell junctions in endothelial cells and is therefore required for correct endothelial cell morphology via facilitating transcellular transmission of mechanical force resulting in endothelial cell elongation. Required for the anchoring of radial actin fibers to CDH1 junction complexes at the cell membrane which facilitates organization of radial actin fiber structure and cellular response to contractile forces. This contributes to maintenance of cell area, size, shape, epithelial sheet organization and trophectoderm cell properties that facilitate blastocyst zona hatching. Inhibits the Wnt/beta-catenin signaling pathway, probably by recruiting CTNNB1 to recycling endosomes and hence preventing its translocation to the nucleus. Participates in angiogenesis. Activates the Hippo signaling pathway in response to cell contact inhibition via interaction with and ubiquitination by Crumbs complex-bound WWP1. Ubiquitinated AMOTL2 then interacts with LATS2 which in turn phosphorylates YAP1, excluding it from the nucleus and localizing it to the cytoplasm and tight junctions, therefore ultimately repressing YAP1-driven transcription of target genes. Acts to inhibit WWTR1/TAZ transcriptional coactivator activity via sequestering WWTR1/TAZ in the cytoplasm and at tight junctions. Regulates the size and protein composition of the podosome cortex and core at myofibril neuromuscular junctions. Selectively promotes FGF-induced MAPK activation through SRC. May play a role in the polarity, proliferation and migration of endothelial cells. The polypeptide is Angiomotin-like protein 2 (Rattus norvegicus (Rat)).